We begin with the raw amino-acid sequence, 277 residues long: Diaminopimelate epimerase (277 aa).

The substrate site is built by N15, Q48, and N66. C75 acts as the Proton donor in catalysis. Substrate contacts are provided by residues 76 to 77 (GN), N156, N189, and 207 to 208 (ER). C216 functions as the Proton acceptor in the catalytic mechanism. 217–218 (GS) contacts substrate.

Belongs to the diaminopimelate epimerase family. As to quaternary structure, homodimer.

The protein resides in the cytoplasm. It catalyses the reaction (2S,6S)-2,6-diaminopimelate = meso-2,6-diaminopimelate. Its pathway is amino-acid biosynthesis; L-lysine biosynthesis via DAP pathway; DL-2,6-diaminopimelate from LL-2,6-diaminopimelate: step 1/1. Catalyzes the stereoinversion of LL-2,6-diaminopimelate (L,L-DAP) to meso-diaminopimelate (meso-DAP), a precursor of L-lysine and an essential component of the bacterial peptidoglycan. This chain is Diaminopimelate epimerase, found in Acidiphilium cryptum (strain JF-5).